Consider the following 697-residue polypeptide: Pentatricopeptide repeat-containing protein At2g13600 (697 aa).

16 PPR repeats span residues Asp18 to Asn53, Glu54 to Arg84, Asn85 to Arg115, Asp116 to Leu150, Asn151 to Ser185, Asp186 to Arg216, Asn217 to Pro251, Asp252 to Asn282, Asp288 to Ala322, Thr324 to Arg349, Asn350 to Pro384, Thr385 to Phe419, Asp426 to Arg456, Asp457 to Pro491, Asp492 to Pro527, and Leu528 to Gln558. The tract at residues Ile563–Gln638 is type E motif. The segment at Gly639–Arg669 is type E(+) motif.

This sequence belongs to the PPR family. PCMP-E subfamily.

This is Pentatricopeptide repeat-containing protein At2g13600 (PCMP-E76) from Arabidopsis thaliana (Mouse-ear cress).